The following is a 32-amino-acid chain: VGCAECPMHCKGKMAKPTCENEVCKCNIGKKD.

Disulfide bonds link Cys-3-Cys-19, Cys-6-Cys-24, and Cys-10-Cys-26.

In terms of tissue distribution, expressed by the venom gland.

Its subcellular location is the secreted. Blocker of human voltage-gated potassium channel Kv1.1/KCNA1. This is Potassium channel toxin alpha-KTx 9.4 from Hottentotta tamulus (Eastern Indian scorpion).